The following is a 161-amino-acid chain: Phosphopantetheine adenylyltransferase (161 aa).

T10 serves as a coordination point for substrate. Residues 10-11 (TF) and H18 contribute to the ATP site. Positions 42, 75, and 89 each coordinate substrate. ATP is bound by residues 90-92 (GLR), E100, and 125-131 (YSFLSSS).

This sequence belongs to the bacterial CoaD family. In terms of assembly, homohexamer. Requires Mg(2+) as cofactor.

It is found in the cytoplasm. The enzyme catalyses (R)-4'-phosphopantetheine + ATP + H(+) = 3'-dephospho-CoA + diphosphate. The protein operates within cofactor biosynthesis; coenzyme A biosynthesis; CoA from (R)-pantothenate: step 4/5. Reversibly transfers an adenylyl group from ATP to 4'-phosphopantetheine, yielding dephospho-CoA (dPCoA) and pyrophosphate. The polypeptide is Phosphopantetheine adenylyltransferase (Thermodesulfovibrio yellowstonii (strain ATCC 51303 / DSM 11347 / YP87)).